Here is a 363-residue protein sequence, read N- to C-terminus: Histidinol-phosphate aminotransferase (363 aa).

Residue K218 is modified to N6-(pyridoxal phosphate)lysine.

It belongs to the class-II pyridoxal-phosphate-dependent aminotransferase family. Histidinol-phosphate aminotransferase subfamily. In terms of assembly, homodimer. Pyridoxal 5'-phosphate is required as a cofactor.

It carries out the reaction L-histidinol phosphate + 2-oxoglutarate = 3-(imidazol-4-yl)-2-oxopropyl phosphate + L-glutamate. It functions in the pathway amino-acid biosynthesis; L-histidine biosynthesis; L-histidine from 5-phospho-alpha-D-ribose 1-diphosphate: step 7/9. In Xanthomonas euvesicatoria pv. vesicatoria (strain 85-10) (Xanthomonas campestris pv. vesicatoria), this protein is Histidinol-phosphate aminotransferase.